The chain runs to 1323 residues: PAS domain-containing serine/threonine-protein kinase (1323 aa).

Methionine 1 is subject to N-acetylmethionine. Residue serine 19 is modified to Phosphoserine. Residues 20-47 (LPLPVSAEGPAAQTTAEPSRSFSSAHRH) form a disordered region. Positions 31–43 (AQTTAEPSRSFSS) are enriched in polar residues. Threonine 34 bears the Phosphothreonine mark. PAS domains follow at residues 119 to 190 (SSPL…MEAD) and 335 to 402 (YRAS…SLQL). Position 582 is a phosphoserine (serine 582). The tract at residues 837-857 (AASDRESPGHVPSTLDAGPED) is disordered. Serine 939 is subject to Phosphoserine. The Protein kinase domain occupies 999 to 1251 (YSTMSPLGSG…LEKLVTDPWV (253 aa)). Residues 1005–1013 (LGSGAFGFV), lysine 1028, and 1082–1089 (EKHGSGLD) contribute to the ATP site. Residue aspartate 1128 is the Proton acceptor of the active site. Aspartate 1146 contributes to the ATP binding site. Residues threonine 1161 and threonine 1165 each carry the phosphothreonine; by autocatalysis modification. The interval 1298–1323 (CGGPVPGEAPNGQGCLHPGDPRLLTS) is disordered.

This sequence belongs to the protein kinase superfamily. CAMK Ser/Thr protein kinase family. In terms of processing, autophosphorylated on Thr-1161 and Thr-1165. Autophosphorylation is activated by phospholipids. Ubiquitously expressed, with slightly higher expression in brain, prostate and testis. Reduced expression was found in placenta. Present in germ cells of testis and in the midpiece of sperm tails (at protein level).

The protein resides in the cytoplasm. It localises to the nucleus. It carries out the reaction L-seryl-[protein] + ATP = O-phospho-L-seryl-[protein] + ADP + H(+). The enzyme catalyses L-threonyl-[protein] + ATP = O-phospho-L-threonyl-[protein] + ADP + H(+). Protein kinase activity is inhibited by the first PAS domain: binding of an unidentified ligand desinhibits the protein kinase activity. May be activated by autophosphorylation on Thr-1161 and Thr-1165. The activating role of autophosphorylation at Thr-1161 is unclear: according to a report, autophosphorylation at Thr-1161 does not play a major role in activation. Autophosphorylation is enhanced upon phosphatidylinositol monophosphate (phosphatidylinositol 4-phosphate) binding and inhibited upon phosphatidylinositol bi- and tri-phosphate binding. In contrast, phosphorylation of target proteins is inhibited upon all phosphatidylinositol-binding (phosphatidylinositol mono- bi- and tri-phosphate). Functionally, serine/threonine-protein kinase involved in energy homeostasis and protein translation. Phosphorylates EEF1A1, GYS1, PDX1 and RPS6. Probably plays a role under changing environmental conditions (oxygen, glucose, nutrition), rather than under standard conditions. Acts as a sensor involved in energy homeostasis: regulates glycogen synthase synthesis by mediating phosphorylation of GYS1, leading to GYS1 inactivation. May be involved in glucose-stimulated insulin production in pancreas and regulation of glucagon secretion by glucose in alpha cells; however such data require additional evidences. May play a role in regulation of protein translation by phosphorylating EEF1A1, leading to increase translation efficiency. May also participate in respiratory regulation. The protein is PAS domain-containing serine/threonine-protein kinase (PASK) of Homo sapiens (Human).